We begin with the raw amino-acid sequence, 281 residues long: NADPH-dependent 7-cyano-7-deazaguanine reductase (281 aa).

87–89 (VES) provides a ligand contact to substrate. 89 to 90 (SK) contributes to the NADPH binding site. Cys188 functions as the Thioimide intermediate in the catalytic mechanism. The Proton donor role is filled by Asp195. Position 227 to 228 (227 to 228 (HE)) interacts with substrate. 256-257 (RG) is a binding site for NADPH.

Belongs to the GTP cyclohydrolase I family. QueF type 2 subfamily. In terms of assembly, homodimer.

It localises to the cytoplasm. It carries out the reaction 7-aminomethyl-7-carbaguanine + 2 NADP(+) = 7-cyano-7-deazaguanine + 2 NADPH + 3 H(+). It functions in the pathway tRNA modification; tRNA-queuosine biosynthesis. Catalyzes the NADPH-dependent reduction of 7-cyano-7-deazaguanine (preQ0) to 7-aminomethyl-7-deazaguanine (preQ1). The polypeptide is NADPH-dependent 7-cyano-7-deazaguanine reductase (Aliivibrio salmonicida (strain LFI1238) (Vibrio salmonicida (strain LFI1238))).